We begin with the raw amino-acid sequence, 228 residues long: Aspartyl protease inhibitor (228 aa).

An N-terminal signal peptide occupies residues 1-15 (MKLIELCVLCAIAFA). The span at 88-112 (KLKSRMSGKKEEKAAVTSTKDEDLP) shows a compositional bias: basic and acidic residues. Positions 88–119 (KLKSRMSGKKEEKAAVTSTKDEDLPKPPQKPS) are disordered. A disulfide bridge connects residues C134 and C224.

It belongs to the protease inhibitor I33 family.

Its subcellular location is the secreted. In terms of biological role, aspartyl protease inhibitor. The chain is Aspartyl protease inhibitor from Trichostrongylus colubriformis (Black scour worm).